A 306-amino-acid polypeptide reads, in one-letter code: Ribonuclease BN (306 aa).

Residues histidine 64, histidine 66, aspartate 68, histidine 69, histidine 141, aspartate 212, and histidine 270 each contribute to the Zn(2+) site. Aspartate 68 (proton acceptor) is an active-site residue.

The protein belongs to the RNase Z family. RNase BN subfamily. In terms of assembly, homodimer. Requires Zn(2+) as cofactor.

Functionally, zinc phosphodiesterase, which has both exoribonuclease and endoribonuclease activities. The protein is Ribonuclease BN of Klebsiella pneumoniae subsp. pneumoniae (strain ATCC 700721 / MGH 78578).